Reading from the N-terminus, the 128-residue chain is Phosphoribosyl-AMP cyclohydrolase (128 aa).

Mg(2+) is bound at residue Asp94. Cys95 lines the Zn(2+) pocket. Asp96 and Asp98 together coordinate Mg(2+). Residues Cys111 and Cys118 each coordinate Zn(2+).

It belongs to the PRA-CH family. As to quaternary structure, homodimer. It depends on Mg(2+) as a cofactor. Zn(2+) is required as a cofactor.

It is found in the cytoplasm. The enzyme catalyses 1-(5-phospho-beta-D-ribosyl)-5'-AMP + H2O = 1-(5-phospho-beta-D-ribosyl)-5-[(5-phospho-beta-D-ribosylamino)methylideneamino]imidazole-4-carboxamide. Its pathway is amino-acid biosynthesis; L-histidine biosynthesis; L-histidine from 5-phospho-alpha-D-ribose 1-diphosphate: step 3/9. Functionally, catalyzes the hydrolysis of the adenine ring of phosphoribosyl-AMP. In Streptomyces coelicolor (strain ATCC BAA-471 / A3(2) / M145), this protein is Phosphoribosyl-AMP cyclohydrolase.